A 225-amino-acid chain; its full sequence is Flagellar transcriptional regulator FlhC (225 aa).

Zn(2+) is bound by residues Cys149, Cys152, Cys169, and Cys172.

Belongs to the FlhC family. Heterohexamer composed of two FlhC and four FlhD subunits. Each FlhC binds a FlhD dimer, forming a heterotrimer, and a hexamer assembles by dimerization of two heterotrimers. It depends on Zn(2+) as a cofactor.

Its subcellular location is the cytoplasm. In terms of biological role, functions in complex with FlhD as a master transcriptional regulator that regulates transcription of several flagellar and non-flagellar operons by binding to their promoter region. Activates expression of class 2 flagellar genes, including fliA, which is a flagellum-specific sigma factor that turns on the class 3 genes. Also regulates genes whose products function in a variety of physiological pathways. In Burkholderia lata (strain ATCC 17760 / DSM 23089 / LMG 22485 / NCIMB 9086 / R18194 / 383), this protein is Flagellar transcriptional regulator FlhC.